The sequence spans 174 residues: Inactive signal peptidase IA (174 aa).

At 1–7 (MKKVVKY) the chain is on the cytoplasmic side. A helical transmembrane segment spans residues 8–28 (LISLILAIIIVLFVQTFVIVG). Topologically, residues 29–174 (HVIPNNDMSP…FSKWTVQFKS (146 aa)) are extracellular.

It belongs to the peptidase S26 family.

The protein resides in the cell membrane. Functionally, catalytically inactive. This Staphylococcus aureus (strain COL) protein is Inactive signal peptidase IA (spsA).